Consider the following 452-residue polypeptide: Phosphoglucosamine mutase (452 aa).

Residue Ser-104 is the Phosphoserine intermediate of the active site. Mg(2+)-binding residues include Ser-104, Asp-246, Asp-248, and Asp-250. Ser-104 is modified (phosphoserine).

This sequence belongs to the phosphohexose mutase family. Requires Mg(2+) as cofactor. Post-translationally, activated by phosphorylation.

It carries out the reaction alpha-D-glucosamine 1-phosphate = D-glucosamine 6-phosphate. Its function is as follows. Catalyzes the conversion of glucosamine-6-phosphate to glucosamine-1-phosphate. This Streptomyces griseus subsp. griseus (strain JCM 4626 / CBS 651.72 / NBRC 13350 / KCC S-0626 / ISP 5235) protein is Phosphoglucosamine mutase.